The primary structure comprises 150 residues: FAD synthase (150 aa).

ATP is bound by residues 11-12 (TF), 16-19 (HPGH), aspartate 96, and tyrosine 124.

The protein belongs to the archaeal FAD synthase family. Homodimer. A divalent metal cation serves as cofactor.

It carries out the reaction FMN + ATP + H(+) = FAD + diphosphate. Its pathway is cofactor biosynthesis; FAD biosynthesis; FAD from FMN: step 1/1. Its function is as follows. Catalyzes the transfer of the AMP portion of ATP to flavin mononucleotide (FMN) to produce flavin adenine dinucleotide (FAD) coenzyme. The polypeptide is FAD synthase (Methanococcus maripaludis (strain DSM 14266 / JCM 13030 / NBRC 101832 / S2 / LL)).